A 131-amino-acid chain; its full sequence is UPF0102 protein YraN (131 aa).

Residues 1-19 are compositionally biased toward polar residues; the sequence is MATVPTRSGSPRQLTTKQT. Residues 1–20 form a disordered region; sequence MATVPTRSGSPRQLTTKQTG.

This sequence belongs to the UPF0102 family.

This is UPF0102 protein YraN from Shigella boydii serotype 18 (strain CDC 3083-94 / BS512).